The primary structure comprises 249 residues: MRILISNDDGVTAPGLAALHGALVDYAECVVIAPDQDKSGAGSSLTLDRPLHPQTLANGFISLNGTPTDCVHLGLNGLLPETPDMVVSGINLGANLGDDVIYSGTVAAALEGRFLGGTSLAFSLLSRLPDNLPSAAFIARRLVEAQSRLELPPRTVLNVNIPNLPLEHIRGIQVTRLGHRARAAAPTKVVNPRGKEGYWIAVAGDAEDGGPGTDFHAVMQGYVSITPLQLDRTFNDAFEQLHGWLEGVL.

A divalent metal cation contacts are provided by D8, D9, S39, and N91.

It belongs to the SurE nucleotidase family. Requires a divalent metal cation as cofactor.

It localises to the cytoplasm. The catalysed reaction is a ribonucleoside 5'-phosphate + H2O = a ribonucleoside + phosphate. In terms of biological role, nucleotidase that shows phosphatase activity on nucleoside 5'-monophosphates. The protein is 5'-nucleotidase SurE of Pseudomonas putida (strain W619).